We begin with the raw amino-acid sequence, 195 residues long: 7-methyl-GTP pyrophosphatase (195 aa).

Aspartate 70 functions as the Proton acceptor in the catalytic mechanism.

It belongs to the Maf family. YceF subfamily. Requires a divalent metal cation as cofactor.

The protein resides in the cytoplasm. The enzyme catalyses N(7)-methyl-GTP + H2O = N(7)-methyl-GMP + diphosphate + H(+). Functionally, nucleoside triphosphate pyrophosphatase that hydrolyzes 7-methyl-GTP (m(7)GTP). May have a dual role in cell division arrest and in preventing the incorporation of modified nucleotides into cellular nucleic acids. The protein is 7-methyl-GTP pyrophosphatase of Shewanella sp. (strain MR-4).